The sequence spans 1010 residues: Pre-mRNA-splicing factor cwc22 (1010 aa).

Positions Met-1–Arg-10 are enriched in polar residues. A disordered region spans residues Met-1 to Val-166. Positions Arg-18–Ser-28 are enriched in low complexity. 2 stretches are compositionally biased toward basic and acidic residues: residues Pro-29–Gly-39 and Pro-65–His-78. Over residues Arg-84–Ala-109 the composition is skewed to low complexity. A compositionally biased stretch (basic and acidic residues) spans Arg-142–Thr-158. The MIF4G domain occupies Lys-222–Lys-405. Residues Gly-466–Lys-498 are disordered. The span at Ala-468–Glu-491 shows a compositional bias: acidic residues. In terms of domain architecture, MI spans Asn-507–Leu-623. Residues Leu-708–Asp-1010 form a disordered region. A compositionally biased stretch (low complexity) spans Glu-718–Arg-732. Over residues Pro-753 to Ser-775 the composition is skewed to basic residues. The segment covering Tyr-776–Ser-787 has biased composition (low complexity). Basic residues-rich tracts occupy residues Arg-834–Ser-846 and Arg-899–Ser-910. Over residues Arg-911 to Arg-935 the composition is skewed to low complexity. A compositionally biased stretch (basic residues) spans Gly-936–Thr-948. The span at Ser-961–Val-973 shows a compositional bias: low complexity. Basic residues predominate over residues Asn-976 to Asp-1010.

This sequence belongs to the CWC22 family. As to quaternary structure, associated with the spliceosome.

The protein resides in the cytoplasm. It is found in the nucleus. Functionally, involved in pre-mRNA splicing. In Neurospora crassa (strain ATCC 24698 / 74-OR23-1A / CBS 708.71 / DSM 1257 / FGSC 987), this protein is Pre-mRNA-splicing factor cwc22 (msp-1).